Consider the following 216-residue polypeptide: Small ribosomal subunit protein uS3 (216 aa).

Residues 38–106 form the KH type-2 domain; sequence IRGYLKKKLY…EIIINILEVR (69 aa).

The protein belongs to the universal ribosomal protein uS3 family. As to quaternary structure, part of the 30S ribosomal subunit. Forms a tight complex with proteins S10 and S14.

Its function is as follows. Binds the lower part of the 30S subunit head. Binds mRNA in the 70S ribosome, positioning it for translation. This chain is Small ribosomal subunit protein uS3, found in Syntrophus aciditrophicus (strain SB).